The sequence spans 411 residues: ATP-dependent RNA helicase eIF4A (411 aa).

The tract at residues 1-23 (MSKPEDTSAAAAAPAGEAGNNLN) is disordered. Residues 9 to 19 (AAAAAPAGEAG) are compositionally biased toward low complexity. A Q motif motif is present at residues 38-66 (DNFDNMELKEELLRGVYAYGFERPSAIQA). A Helicase ATP-binding domain is found at 69 to 239 (IVPVIKGHDV…KKFMRDPIRI (171 aa)). ATP is bound at residue 82 to 89 (AQSGTGKT). The DEAD box signature appears at 187 to 190 (DEAD). The region spanning 250-411 (GIKQFYVAVE…EMPLNVADLI (162 aa)) is the Helicase C-terminal domain.

It belongs to the DEAD box helicase family. eIF4A subfamily. As to quaternary structure, component of the eIF4F complex, which composition varies with external and internal environmental conditions. It is composed of at least eIF4A, eIF4E and eIF4G.

The protein resides in the cytoplasm. The enzyme catalyses ATP + H2O = ADP + phosphate + H(+). Functionally, ATP-dependent RNA helicase which is a subunit of the eIF4F complex involved in cap recognition and is required for mRNA binding to ribosome. In the current model of translation initiation, eIF4A unwinds RNA secondary structures in the 5'-UTR of mRNAs which is necessary to allow efficient binding of the small ribosomal subunit, and subsequent scanning for the initiator codon. In Mycosarcoma maydis (Corn smut fungus), this protein is ATP-dependent RNA helicase eIF4A (TIF1).